The sequence spans 109 residues: Parvalbumin alpha (109 aa).

EF-hand domains follow at residues 38-73 (KSKEIMQKVFHVLDQDQSGFIEKEELCLILKGFTPE) and 77-109 (LSDKETTALLAAGDKDGDGKIGVDEFVTLVSES). Residues aspartate 51, aspartate 53, serine 55, phenylalanine 57, glutamate 59, glutamate 62, aspartate 90, aspartate 92, aspartate 94, lysine 96, and glutamate 101 each coordinate Ca(2+).

The protein belongs to the parvalbumin family.

Its function is as follows. In muscle, parvalbumin is thought to be involved in relaxation after contraction. It binds two calcium ions. The chain is Parvalbumin alpha from Pelophylax lessonae (Pool frog).